A 239-amino-acid polypeptide reads, in one-letter code: Ribonuclease PH (239 aa).

Residues arginine 86 and 124–126 (GTR) contribute to the phosphate site.

Belongs to the RNase PH family. Homohexameric ring arranged as a trimer of dimers.

It catalyses the reaction tRNA(n+1) + phosphate = tRNA(n) + a ribonucleoside 5'-diphosphate. In terms of biological role, phosphorolytic 3'-5' exoribonuclease that plays an important role in tRNA 3'-end maturation. Removes nucleotide residues following the 3'-CCA terminus of tRNAs; can also add nucleotides to the ends of RNA molecules by using nucleoside diphosphates as substrates, but this may not be physiologically important. Probably plays a role in initiation of 16S rRNA degradation (leading to ribosome degradation) during starvation. This chain is Ribonuclease PH, found in Rickettsia akari (strain Hartford).